Consider the following 142-residue polypeptide: Large ribosomal subunit protein uL13 (142 aa).

Belongs to the universal ribosomal protein uL13 family. As to quaternary structure, part of the 50S ribosomal subunit.

In terms of biological role, this protein is one of the early assembly proteins of the 50S ribosomal subunit, although it is not seen to bind rRNA by itself. It is important during the early stages of 50S assembly. This is Large ribosomal subunit protein uL13 from Coxiella burnetii (strain CbuK_Q154) (Coxiella burnetii (strain Q154)).